The sequence spans 286 residues: MVAKILDGKQIAKDYRQGLQNQVEALKEKGFTPKLSVILVGNDGASQSYVRSKKKAAEKIGMISEIVHLEETATEEEVLNELNRLNNDDSVSGILVQVPLPKQVSEQKILEAINPDKDVDGFHPINIGKLYIDEQTFVPCTPLGIMEILKHADIDLEGKNAVVIGRSHIVGQPVSKLLLQKNASVTILHSRSKDMASYLKDADVIVSAVGKPGLVTKDVVKEGAVIIDVGNTPDENGKLKGDVDYDAVKEIAGAITPVPGGVGPLTITMVLNNTLLAEKMRRGVDS.

Residues 165–167 and serine 190 each bind NADP(+); that span reads GRS.

It belongs to the tetrahydrofolate dehydrogenase/cyclohydrolase family. As to quaternary structure, homodimer.

The catalysed reaction is (6R)-5,10-methylene-5,6,7,8-tetrahydrofolate + NADP(+) = (6R)-5,10-methenyltetrahydrofolate + NADPH. The enzyme catalyses (6R)-5,10-methenyltetrahydrofolate + H2O = (6R)-10-formyltetrahydrofolate + H(+). It functions in the pathway one-carbon metabolism; tetrahydrofolate interconversion. Functionally, catalyzes the oxidation of 5,10-methylenetetrahydrofolate to 5,10-methenyltetrahydrofolate and then the hydrolysis of 5,10-methenyltetrahydrofolate to 10-formyltetrahydrofolate. The polypeptide is Bifunctional protein FolD (Staphylococcus aureus (strain bovine RF122 / ET3-1)).